Here is a 2442-residue protein sequence, read N- to C-terminus: Centrosome-associated protein CEP250 (2442 aa).

4 coiled-coil regions span residues 95–158, 244–352, 395–1172, and 1243–2227; these read NLDE…KESQ, AQLL…TQVM, LTRR…EQQP, and SALH…KERL. Basic and acidic residues-rich tracts occupy residues 1273–1289 and 1699–1715; these read LTDTEAEKSQVHTELQD and LTTQRQLMQERAEEGKG. Disordered stretches follow at residues 1273–1308, 1699–1725, and 1820–1839; these read LTDTEAEKSQVHTELQDLQRQLSQNQEEKSKWEGKQ, LTTQRQLMQERAEEGKGPSKAQRGSLE, and EALQQEQQQAQGQEERVKEK. Over residues 1820-1831 the composition is skewed to low complexity; the sequence is EALQQEQQQAQG. Phosphoserine is present on Ser-2138. Thr-2218 is modified (phosphothreonine). Residues 2223-2244 form a disordered region; the sequence is EKERLHSPGATSTAELGSRGEQ. A phosphoserine mark is found at Ser-2229, Ser-2252, and Ser-2322. A coiled-coil region spans residues 2262–2376; sequence GMEKQSWRQR…RKQKQDYITR (115 aa). 2 disordered regions span residues 2307-2345 and 2416-2442; these read RRKLKREAMRAAQAGSLEISKATASSPTQQDGRGQKNSD and ESLTQSLTSPGPVLLHPSPSTTQAASR. Residues 2328-2338 show a composition bias toward polar residues; sequence ATASSPTQQDG. Residues Ser-2417 and Ser-2421 each carry the phosphoserine; by NEK2 modification. The segment covering 2433-2442 has biased composition (polar residues); that stretch reads SPSTTQAASR.

Monomer and homodimer. Forms a complex in vitro with both NEK2 kinase and the PPP1CC catalytic subunit of protein phosphatase 1 (PP1). Interacts with CEP135. Interacts with CROCC/rootletin. Interacts with CNTLN. Interacts with NIN (via C-terminus). Interacts with CCDC102B (via N-terminus); the interaction results in recruitment of CCDC102B to the proximal ends of centrioles. Differentially phosphorylated during cell cycle. Phosphorylation may regulate association/dissociation from centrosome. During M phase of mitosis, C-terminal part is phosphorylated by NEK2, suggesting that it may trigger the dissociation from the mitotic centrosome. Dephosphorylated in vitro by the PP1 phosphatase. Ubiquitously and weakly expressed.

The protein resides in the cytoplasm. It is found in the perinuclear region. It localises to the cytoskeleton. The protein localises to the microtubule organizing center. Its subcellular location is the centrosome. The protein resides in the centriole. It is found in the cilium basal body. It localises to the cell projection. The protein localises to the cilium. Its subcellular location is the photoreceptor outer segment. The protein resides in the photoreceptor inner segment. Its function is as follows. Plays an important role in centrosome cohesion during interphase. Recruits CCDC102B to the proximal ends of centrioles. Maintains centrosome cohesion by forming intercentriolar linkages. Accumulates at the proximal end of each centriole, forming supramolecular assemblies with viscous material properties that promote organelle cohesion. May be involved in ciliogenesis. This Homo sapiens (Human) protein is Centrosome-associated protein CEP250 (CEP250).